A 469-amino-acid polypeptide reads, in one-letter code: Cell division protein FtsP (469 aa).

A signal peptide (tat-type signal) is located at residues 1-29 (MPRLSRRQLLKTAAISTALSTVPAPLLAA). Positions 228–286 (IRLRLLNASLARAYDLRLDNDQEMLLIAQDLSFLPKAKSVKSLVLSPGERAEILVNMNE) constitute a Plastocyanin-like domain.

The protein belongs to the FtsP family. Post-translationally, predicted to be exported by the Tat system. The position of the signal peptide cleavage has not been experimentally proven.

It localises to the periplasm. Functionally, cell division protein that is required for growth during stress conditions. May be involved in protecting or stabilizing the divisomal assembly under conditions of stress. This is Cell division protein FtsP from Haemophilus influenzae (strain 86-028NP).